The chain runs to 327 residues: Phenylalanine--tRNA ligase alpha subunit (327 aa).

Glu-252 serves as a coordination point for Mg(2+).

It belongs to the class-II aminoacyl-tRNA synthetase family. Phe-tRNA synthetase alpha subunit type 1 subfamily. In terms of assembly, tetramer of two alpha and two beta subunits. Requires Mg(2+) as cofactor.

It localises to the cytoplasm. It carries out the reaction tRNA(Phe) + L-phenylalanine + ATP = L-phenylalanyl-tRNA(Phe) + AMP + diphosphate + H(+). The sequence is that of Phenylalanine--tRNA ligase alpha subunit from Vibrio campbellii (strain ATCC BAA-1116).